The following is a 101-amino-acid chain: UPF0235 protein Cpha266_2081 (101 aa).

This sequence belongs to the UPF0235 family.

In Chlorobium phaeobacteroides (strain DSM 266 / SMG 266 / 2430), this protein is UPF0235 protein Cpha266_2081.